The primary structure comprises 349 residues: MSKIRVLSVDDSALMRQIMTEIINSHSDMEMVATAPDPLVARDLIKKFNPDVLTLDVEMPRMDGLDFLEKLMRLRPMPVVMVSSLTGKGSEVTLRALELGAIDFVTKPQLGIREGMLAYSEMIAEKVRTAARARIAAHKPMAAPATLKAGPLLSSEKLIAIGASTGGTEAIRHVLQPLPLSSPAVIITQHMPPGFTRSFAERLNKLCQISVKEAEDGERVLPGHAYIAPGDKHMELARSGANYQIKIHDGPPVNRHRPSVDVLFHSVAKHAGRNAVGVILTGMGNDGAAGMLAMYQAGAWTIAQNEASCVVFGMPREAINMGGVSEVVDLSQVSQQMLAKISAGQAIRI.

A Response regulatory domain is found at 5-122; it reads RVLSVDDSAL…REGMLAYSEM (118 aa). Aspartate 56 bears the 4-aspartylphosphate mark. The region spanning 152-344 is the CheB-type methylesterase domain; that stretch reads LLSSEKLIAI…QQMLAKISAG (193 aa). Active-site residues include serine 164, histidine 190, and aspartate 286.

The protein belongs to the CheB family. Phosphorylated by CheA. Phosphorylation of the N-terminal regulatory domain activates the methylesterase activity.

The protein resides in the cytoplasm. The catalysed reaction is [protein]-L-glutamate 5-O-methyl ester + H2O = L-glutamyl-[protein] + methanol + H(+). It catalyses the reaction L-glutaminyl-[protein] + H2O = L-glutamyl-[protein] + NH4(+). Functionally, involved in chemotaxis. Part of a chemotaxis signal transduction system that modulates chemotaxis in response to various stimuli. Catalyzes the demethylation of specific methylglutamate residues introduced into the chemoreceptors (methyl-accepting chemotaxis proteins or MCP) by CheR. Also mediates the irreversible deamidation of specific glutamine residues to glutamic acid. The protein is Protein-glutamate methylesterase/protein-glutamine glutaminase of Salmonella choleraesuis (strain SC-B67).